The sequence spans 1568 residues: Kielin/chordin-like protein (1568 aa).

The signal sequence occupies residues 1-23 (MAGVGAAALSLLLHLGALALAAG). The interval 27 to 49 (GAVPREPPGQQTTAHSSVLAGNS) is disordered. Residues 35 to 49 (GQQTTAHSSVLAGNS) are compositionally biased toward polar residues. The stretch at 60-87 (LGRLEAAVMELREQNKDLQTRVRQLESC) forms a coiled coil. 16 consecutive VWFC domains span residues 136 to 193 (RGCS…PICR), 194 to 253 (PGCD…PTCQ), 253 to 312 (QGCT…PVCD), 312 to 370 (DGCF…PVCD), 426 to 485 (PACE…PSCD), 485 to 544 (DSCT…PRCP), 544 to 602 (PDCI…NDCS), 602 to 661 (SGCA…PQCP), 667 to 725 (AGCP…PSCD), 725 to 782 (DGCL…PDCD), 782 to 841 (DGCE…PTCQ), 900 to 959 (HSCL…PRCR), 959 to 1017 (RGCL…PQCS), 1017 to 1085 (SDCE…PTCA), 1082 to 1145 (PTCA…PVCR), and 1149 to 1209 (QSCV…PRCL). N-linked (GlcNAc...) asparagine glycosylation occurs at Asn340. An N-linked (GlcNAc...) asparagine glycan is attached at Asn499. Asn1090 is a glycosylation site (N-linked (GlcNAc...) asparagine). Residues 1213–1389 (ASCMAFGDPH…EGLWPGRPCS (177 aa)) enclose the VWFD domain. 2 cysteine pairs are disulfide-bonded: Cys1215–Cys1347 and Cys1237–Cys1388. Residues 1483-1543 (CPLERGFVFD…EAHCIPPEAC (61 aa)) form the TIL domain.

Interacts with BMP7 and, by doing so, enhances binding to the type I receptors that contains cytoplasmic serine/threonine protein kinase domains. Also able to interact with activin-A and TGFB1.

It is found in the secreted. Functionally, enhances bone morphogenetic protein (BMP) signaling in a paracrine manner. In contrast, it inhibits both the activin-A and TGFB1-mediated signaling pathways. In Homo sapiens (Human), this protein is Kielin/chordin-like protein.